The sequence spans 522 residues: Amphoterin-induced protein 2 (522 aa).

The N-terminal stretch at M1–G39 is a signal peptide. The region spanning V40–R68 is the LRRNT domain. Over V40–T398 the chain is Extracellular. 2 cysteine pairs are disulfide-bonded: C41-C47 and C45-C54. A glycan (N-linked (GlcNAc...) asparagine) is linked at N58. LRR repeat units follow at residues L69–V90, K94–T115, N118–E139, V142–G163, Q166–G187, and E193–L214. The N-linked (GlcNAc...) asparagine glycan is linked to N104. The LRRCT domain occupies N228 to D284. 2 cysteine pairs are disulfide-bonded: C232-C260 and C234-C282. Residues N281, N288, N345, N373, N381, and N384 are each glycosylated (N-linked (GlcNAc...) asparagine). The Ig-like C2-type domain occupies G289–T379. C310 and C363 form a disulfide bridge. Residues A399–L419 form a helical membrane-spanning segment. Topologically, residues T420–T522 are cytoplasmic. Residues R501–T522 form a disordered region.

The protein belongs to the immunoglobulin superfamily. AMIGO family. In terms of assembly, binds itself as well as AMIGO1 and AMIGO3. As to expression, highest levels in breast, ovary, cervix, and uterus. Lower levels in lung, colon, and rectum. Differentially expressed in 56% of thyroid, 57% of pancreatic and 45% of stomach cancers.

The protein localises to the cell membrane. Its subcellular location is the nucleus. In terms of biological role, required for depolarization-dependent survival of cultured cerebellar granule neurons. May mediate homophilic as well as heterophilic cell-cell interaction with AMIGO1 or AMIGO3. May contribute to signal transduction through its intracellular domain. May be required for tumorigenesis of a subset of gastric adenocarcinomas. This Homo sapiens (Human) protein is Amphoterin-induced protein 2.